Here is a 314-residue protein sequence, read N- to C-terminus: Ribosomal protein L11 methyltransferase (314 aa).

S-adenosyl-L-methionine-binding residues include Thr-161, Gly-182, Asp-204, and Asn-248.

It belongs to the methyltransferase superfamily. PrmA family.

The protein resides in the cytoplasm. It catalyses the reaction L-lysyl-[protein] + 3 S-adenosyl-L-methionine = N(6),N(6),N(6)-trimethyl-L-lysyl-[protein] + 3 S-adenosyl-L-homocysteine + 3 H(+). Its function is as follows. Methylates ribosomal protein L11. This Listeria monocytogenes serotype 4a (strain HCC23) protein is Ribosomal protein L11 methyltransferase.